The chain runs to 293 residues: Release factor glutamine methyltransferase (293 aa).

Residues 130-134 (GTGSG), Asp-153, Trp-182, and Asn-199 contribute to the S-adenosyl-L-methionine site. Residue 199–202 (NPPY) coordinates substrate.

Belongs to the protein N5-glutamine methyltransferase family. PrmC subfamily.

The catalysed reaction is L-glutaminyl-[peptide chain release factor] + S-adenosyl-L-methionine = N(5)-methyl-L-glutaminyl-[peptide chain release factor] + S-adenosyl-L-homocysteine + H(+). In terms of biological role, methylates the class 1 translation termination release factors RF1/PrfA and RF2/PrfB on the glutamine residue of the universally conserved GGQ motif. The sequence is that of Release factor glutamine methyltransferase from Prochlorococcus marinus (strain SARG / CCMP1375 / SS120).